Here is a 500-residue protein sequence, read N- to C-terminus: Probable cytosol aminopeptidase (500 aa).

Residues K264 and D269 each contribute to the Mn(2+) site. Residue K276 is part of the active site. Residues D287, D346, and E348 each contribute to the Mn(2+) site. R350 is an active-site residue.

It belongs to the peptidase M17 family. Requires Mn(2+) as cofactor.

The protein localises to the cytoplasm. It carries out the reaction Release of an N-terminal amino acid, Xaa-|-Yaa-, in which Xaa is preferably Leu, but may be other amino acids including Pro although not Arg or Lys, and Yaa may be Pro. Amino acid amides and methyl esters are also readily hydrolyzed, but rates on arylamides are exceedingly low.. The catalysed reaction is Release of an N-terminal amino acid, preferentially leucine, but not glutamic or aspartic acids.. Presumably involved in the processing and regular turnover of intracellular proteins. Catalyzes the removal of unsubstituted N-terminal amino acids from various peptides. The sequence is that of Probable cytosol aminopeptidase from Nitrobacter hamburgensis (strain DSM 10229 / NCIMB 13809 / X14).